The primary structure comprises 364 residues: UDP-N-acetylglucosamine--N-acetylmuramyl-(pentapeptide) pyrophosphoryl-undecaprenol N-acetylglucosamine transferase (364 aa).

Residues 13–15, asparagine 125, arginine 165, serine 192, and glutamine 293 each bind UDP-N-acetyl-alpha-D-glucosamine; that span reads TGG.

The protein belongs to the glycosyltransferase 28 family. MurG subfamily.

The protein localises to the cell inner membrane. It catalyses the reaction di-trans,octa-cis-undecaprenyl diphospho-N-acetyl-alpha-D-muramoyl-L-alanyl-D-glutamyl-meso-2,6-diaminopimeloyl-D-alanyl-D-alanine + UDP-N-acetyl-alpha-D-glucosamine = di-trans,octa-cis-undecaprenyl diphospho-[N-acetyl-alpha-D-glucosaminyl-(1-&gt;4)]-N-acetyl-alpha-D-muramoyl-L-alanyl-D-glutamyl-meso-2,6-diaminopimeloyl-D-alanyl-D-alanine + UDP + H(+). Its pathway is cell wall biogenesis; peptidoglycan biosynthesis. Functionally, cell wall formation. Catalyzes the transfer of a GlcNAc subunit on undecaprenyl-pyrophosphoryl-MurNAc-pentapeptide (lipid intermediate I) to form undecaprenyl-pyrophosphoryl-MurNAc-(pentapeptide)GlcNAc (lipid intermediate II). The sequence is that of UDP-N-acetylglucosamine--N-acetylmuramyl-(pentapeptide) pyrophosphoryl-undecaprenol N-acetylglucosamine transferase from Cereibacter sphaeroides (strain ATCC 17025 / ATH 2.4.3) (Rhodobacter sphaeroides).